Consider the following 102-residue polypeptide: Large ribosomal subunit protein bL21 (102 aa).

The protein belongs to the bacterial ribosomal protein bL21 family. In terms of assembly, part of the 50S ribosomal subunit. Contacts protein L20.

This protein binds to 23S rRNA in the presence of protein L20. This Levilactobacillus brevis (strain ATCC 367 / BCRC 12310 / CIP 105137 / JCM 1170 / LMG 11437 / NCIMB 947 / NCTC 947) (Lactobacillus brevis) protein is Large ribosomal subunit protein bL21.